A 460-amino-acid chain; its full sequence is Nuclear distribution protein PAC1-1 (460 aa).

One can recognise a LisH domain in the interval 9–41; it reads QADELHRALIAYLTAANLPNTAAALREELNLGE. Residues 74-96 adopt a coiled-coil conformation; it reads LVTQIMDLESRNHILQSELDNAT. Residues 90 to 100 are compositionally biased toward polar residues; the sequence is SELDNATPTSR. The disordered stretch occupies residues 90-115; sequence SELDNATPTSRQNKDPVAWLPRAPPR. WD repeat units lie at residues 120–161, 163–203, 207–247, 250–289, 294–354, 355–394, 399–439, and 441–460; these read SHRD…RTIK, HTKA…KNIR, GHDH…CVKT, GHAEWVRDVCPSFDGKYILSTSDDYTSRLWDVTVTNPEPR, GHEH…KTLA, GHDNWVRGLVFHPGGKYLLSVSDDKTLRCWDLTQEGKCVK, AHGH…VTPD, and QIRCVIATGSVDLNVRIFAN.

The protein belongs to the WD repeat LIS1/nudF family. In terms of assembly, self-associates. Interacts with NDL1 and dynein.

It localises to the cytoplasm. The protein resides in the cytoskeleton. It is found in the spindle pole. Positively regulates the activity of the minus-end directed microtubule motor protein dynein. May enhance dynein-mediated microtubule sliding by targeting dynein to the microtubule plus end. Required for nuclear migration during vegetative growth as well as development. Required for retrograde early endosome (EE) transport from the hyphal tip. Required for localization of dynein to the mitotic spindle poles. Recruits additional proteins to the dynein complex at SPBs. This is Nuclear distribution protein PAC1-1 from Sordaria macrospora (strain ATCC MYA-333 / DSM 997 / K(L3346) / K-hell).